We begin with the raw amino-acid sequence, 380 residues long: Cytochrome b (380 aa).

The next 4 helical transmembrane spans lie at 34–54 (FGSLLPVCLIAQIATGLFLAM), 78–99 (WLLRNLHANGASFFFICIYFHI), 114–134 (WNIGVILLLLVMATAFVGYVL), and 179–199 (FFTFDFILLFIIAATSLIHLL). 2 residues coordinate heme b: His-84 and His-98. Heme b is bound at residue His-197. Residue His-202 participates in a ubiquinone binding. The next 4 helical transmembrane spans lie at 227–247 (FKDLLGFIILLGALAILSTFA), 289–309 (LGGVLALLLSIMVLFLMPITH), 321–341 (TAKAFFWALIANTIILTWIGG), and 348–368 (FISIGQIASGLYFLIFVLIIP).

Belongs to the cytochrome b family. As to quaternary structure, the cytochrome bc1 complex contains 3 respiratory subunits (MT-CYB, CYC1 and UQCRFS1), 2 core proteins (UQCRC1 and UQCRC2) and probably 6 low-molecular weight proteins. Requires heme b as cofactor.

The protein resides in the mitochondrion inner membrane. Functionally, component of the ubiquinol-cytochrome c reductase complex (complex III or cytochrome b-c1 complex) that is part of the mitochondrial respiratory chain. The b-c1 complex mediates electron transfer from ubiquinol to cytochrome c. Contributes to the generation of a proton gradient across the mitochondrial membrane that is then used for ATP synthesis. This chain is Cytochrome b (mt-cyb), found in Glandirana rugosa (Japanese wrinkled frog).